The sequence spans 252 residues: MHYQPKQDLLNDRIILVTGASDGIGREAAMTYARYGATVILLGRNEEKLRQVASHINEETGRQPQWFILDLLTCTSENCQQLAQRIAVNYPRLDGVLHNAGLLGDVCPMSEQNPQVWQDVMQVNVNATFMLTQALLPLLLKSDAGSLVFTSSSVGRQGRANWGAYAASKFATEGMMQVLADEYQQRLRVNCINPGGTRTAMRASAFPTEDPQKLKTPADIMPLYLWLMGDDSRRKTGMTFDAQPGRKPGISQ.

16–40 (LVTGASDGIGREAAMTYARYGATVI) lines the NADP(+) pocket. Position 152 (Ser-152) interacts with substrate. Residue Tyr-165 is the Proton acceptor of the active site.

It belongs to the short-chain dehydrogenases/reductases (SDR) family.

This is an uncharacterized protein from Escherichia coli (strain K12).